The chain runs to 88 residues: Electron transfer flavoprotein regulatory factor 1 (88 aa).

It belongs to the complex I LYR family. As to quaternary structure, homotetramer. Interacts with NDUFAB1. Interacts with ETFA. Interacts with ETFB.

The protein localises to the mitochondrion. Acts as a regulator of the electron transfer flavoprotein by promoting the removal of flavin from the ETF holoenzyme (composed of ETFA and ETFB). The chain is Electron transfer flavoprotein regulatory factor 1 from Bos taurus (Bovine).